The sequence spans 39 residues: Photosystem II reaction center protein L (39 aa).

The chain crosses the membrane as a helical span at residues 18–38 (SLYLGLLLVAVLGILFSSYFF).

The protein belongs to the PsbL family. As to quaternary structure, PSII is composed of 1 copy each of membrane proteins PsbA, PsbB, PsbC, PsbD, PsbE, PsbF, PsbH, PsbI, PsbJ, PsbK, PsbL, PsbM, PsbT, PsbX, PsbY, PsbZ, Psb30/Ycf12, peripheral proteins PsbO, CyanoQ (PsbQ), PsbU, PsbV and a large number of cofactors. It forms dimeric complexes.

It is found in the cellular thylakoid membrane. One of the components of the core complex of photosystem II (PSII). PSII is a light-driven water:plastoquinone oxidoreductase that uses light energy to abstract electrons from H(2)O, generating O(2) and a proton gradient subsequently used for ATP formation. It consists of a core antenna complex that captures photons, and an electron transfer chain that converts photonic excitation into a charge separation. This subunit is found at the monomer-monomer interface and is required for correct PSII assembly and/or dimerization. This Microcystis aeruginosa (strain NIES-843 / IAM M-2473) protein is Photosystem II reaction center protein L.